The primary structure comprises 292 residues: MGNQLDRITHLNYSELPTGDPSGIEKDELRVGVAYFFSDDEEDLDERGQPDKFGVKAPPGCTPCPESPSRHHHHLLHQLVLNETQFSAFRGQECIFSKVSGGPQGADLSVYAVTALPALCEPGDLLELLWLQPAPEPPAPAPHWAVYVGGGQIIHLHQGEIRQDSLYEAGAANVGRVVNSWYRYRPLVAELVVQNACGHLGLKSEEICWTNSESFAAWCRFGKREFKAGGEVPAGTQPPQQQYYLKVHLGENKVHTARFHSLEDLIREKRRIDASGRLRVLQELADLVDDKE.

A Phosphoserine modification is found at Ser-38. In terms of domain architecture, LRAT spans 133–228 (PAPEPPAPAP…CRFGKREFKA (96 aa)).

Belongs to the LRATD family. Only detected in testis. Highly expressed in colon cancer cells.

The protein resides in the cytoplasm. Its function is as follows. May play a role in cell morphology and motility. The polypeptide is Protein LRATD1 (Homo sapiens (Human)).